Reading from the N-terminus, the 87-residue chain is U14-lycotoxin-Ls1a (87 aa).

The N-terminal stretch at 1-20 (MNSKVFAVLLLLALLTCVLS) is a signal peptide. Residues 21–66 (EKYCPTPRNTSCKKMNIRNNCCRDSDCTSNAFCCAEPCGNFCHKAS) form the WAP domain. Intrachain disulfides connect C24-C54, C32-C58, C41-C53, C42-C80, and C47-C62.

It belongs to the venom protein 11 family. 01 (wap-1) subfamily. In terms of processing, contains 5 disulfide bonds. As to expression, expressed by the venom gland.

It localises to the secreted. Its function is as follows. Has antibacterial activity. The sequence is that of U14-lycotoxin-Ls1a from Lycosa singoriensis (Wolf spider).